The sequence spans 259 residues: Imidazole glycerol phosphate synthase subunit HisF (259 aa).

Catalysis depends on residues D11 and D130.

This sequence belongs to the HisA/HisF family. In terms of assembly, heterodimer of HisH and HisF.

Its subcellular location is the cytoplasm. The enzyme catalyses 5-[(5-phospho-1-deoxy-D-ribulos-1-ylimino)methylamino]-1-(5-phospho-beta-D-ribosyl)imidazole-4-carboxamide + L-glutamine = D-erythro-1-(imidazol-4-yl)glycerol 3-phosphate + 5-amino-1-(5-phospho-beta-D-ribosyl)imidazole-4-carboxamide + L-glutamate + H(+). It functions in the pathway amino-acid biosynthesis; L-histidine biosynthesis; L-histidine from 5-phospho-alpha-D-ribose 1-diphosphate: step 5/9. Functionally, IGPS catalyzes the conversion of PRFAR and glutamine to IGP, AICAR and glutamate. The HisF subunit catalyzes the cyclization activity that produces IGP and AICAR from PRFAR using the ammonia provided by the HisH subunit. The sequence is that of Imidazole glycerol phosphate synthase subunit HisF from Desulforapulum autotrophicum (strain ATCC 43914 / DSM 3382 / VKM B-1955 / HRM2) (Desulfobacterium autotrophicum).